A 310-amino-acid polypeptide reads, in one-letter code: Aspartate carbamoyltransferase catalytic subunit 1 (310 aa).

Residues Arg-55 and Thr-56 each contribute to the carbamoyl phosphate site. Lys-85 provides a ligand contact to L-aspartate. Positions 106, 134, and 137 each coordinate carbamoyl phosphate. Arg-167 and Arg-228 together coordinate L-aspartate. Positions 266 and 267 each coordinate carbamoyl phosphate.

The protein belongs to the aspartate/ornithine carbamoyltransferase superfamily. ATCase family. In terms of assembly, heterododecamer (2C3:3R2) of six catalytic PyrB chains organized as two trimers (C3), and six regulatory PyrI chains organized as three dimers (R2).

The enzyme catalyses carbamoyl phosphate + L-aspartate = N-carbamoyl-L-aspartate + phosphate + H(+). Its pathway is pyrimidine metabolism; UMP biosynthesis via de novo pathway; (S)-dihydroorotate from bicarbonate: step 2/3. In terms of biological role, catalyzes the condensation of carbamoyl phosphate and aspartate to form carbamoyl aspartate and inorganic phosphate, the committed step in the de novo pyrimidine nucleotide biosynthesis pathway. The chain is Aspartate carbamoyltransferase catalytic subunit 1 from Shewanella halifaxensis (strain HAW-EB4).